Reading from the N-terminus, the 82-residue chain is Large ribosomal subunit protein bL27c (82 aa).

The interval 1-22 (MAHKKGAGSTKNGRDSNSKRLG) is disordered.

The protein belongs to the bacterial ribosomal protein bL27 family.

The protein localises to the plastid. Its subcellular location is the chloroplast. In Chrysotila carterae (Marine alga), this protein is Large ribosomal subunit protein bL27c (rpl27).